Consider the following 391-residue polypeptide: Eukaryotic initiation factor 4A-3 (391 aa).

Residues 18 to 46 (ASFAEMGIKDDLLRGVYQYGFEKPSAIQQ) carry the Q motif motif. The region spanning 49–219 (VLPIISGRDV…SKFMTDPVRI (171 aa)) is the Helicase ATP-binding domain. 62-69 (AQSGTGKT) contacts ATP. The short motif at 167–170 (DESD) is the DEAD box element. One can recognise a Helicase C-terminal domain in the interval 230–391 (GIKQFFVAVE…EMPMNVADLI (162 aa)).

It belongs to the DEAD box helicase family. eIF4A subfamily. As to quaternary structure, eIF4F is a multi-subunit complex, the composition of which varies with external and internal environmental conditions. It is composed of at least EIF4A, EIF4E and EIF4G.

The enzyme catalyses ATP + H2O = ADP + phosphate + H(+). Functionally, ATP-dependent RNA helicase which is a subunit of the eIF4F complex involved in cap recognition and is required for mRNA binding to ribosome. In the current model of translation initiation, eIF4A unwinds RNA secondary structures in the 5'-UTR of mRNAs which is necessary to allow efficient binding of the small ribosomal subunit, and subsequent scanning for the initiator codon. The sequence is that of Eukaryotic initiation factor 4A-3 from Nicotiana plumbaginifolia (Leadwort-leaved tobacco).